The sequence spans 865 residues: MVASARVQKLVRRYKLAIATALAILLLQGLVVWSFSGLEEDEPGEKGRQRKPRPLDPGEGSKDTDSSAGRRGSAGRRHGRWRGRAESPGVPVAKVVRAVTSRQRASRRVPPAPPPEAPGRQNLSGAAAGEALIGAPGFPQHGDTGSVEGAPQPTDNTFTPKCEIVGKDALSALARASTKQCQQEIANVVCLHQAGNLMPKSVPRHCQLAGKMSPGVQWEEIRAQQPVGGPPVRIAYMLVVHGRAIRQLKRLLKAVYHEQHFFYIHVDKRSNYLYREVVELAQHYENVRVTPWRMVTIWGGASLLRMYLRSMKDLLEIPGWTWDFFINLSATDYPTRTNEELVAFLSKNRDKNFLKSHGRDNSRFIKKQGLDRLFHECDSHMWRLGERQIPAGIVVDGGSDWFVLTRSFVEYVVYTDDPLVAQLRQFYTYTLLPAESFFHTVLENSPACASLVDNNLRVTNWNRKLGCKCQYKHIVDWCGCSPNDFKPQDFLRLQQVSRPTFFARKFESTVNQEVLEILDFHLYGSYPPSTPALKAYWENIYDVADGPGGLSDVLLTAYTAFARLSLRHAATAVSPLATAVCRFEPRGLPSSVHLYFYDDHFQGYLVTQAVQPSAQGPAETLEMWLMPQRSLKLLGHSDQASRLQSLEVGTEWDPKERLFRNFGGLLGPLDEPVAMQRWARGPNLTATVVWIDPTYVVATSYDITVDADTEVTQYKPPLSLPLRPGAWTVRLLQFWEPLGETRFLVLPLTFNRKLPLRKDDASWLHAGPPHNEYMEQSFQGLSGILNLPQAEALEEAARRHTELTGSALEAWTDGELSNFWSVAGLCAIGPSACPSLELCRLTSWSSLSPDPKSELGPVKADGRLR.

Residues 1–15 lie on the Cytoplasmic side of the membrane; sequence MVASARVQKLVRRYK. Residues 16–36 traverse the membrane as a helical; Signal-anchor for type II membrane protein segment; it reads LAIATALAILLLQGLVVWSFS. Over 37–865 the chain is Lumenal; the sequence is GLEEDEPGEK…GPVKADGRLR (829 aa). A disordered region spans residues 39-155; that stretch reads EEDEPGEKGR…SVEGAPQPTD (117 aa). Positions 53–65 are enriched in basic and acidic residues; sequence RPLDPGEGSKDTD. Positions 73–82 are enriched in basic residues; it reads SAGRRHGRWR. Asn-122 carries N-linked (GlcNAc...) asparagine glycosylation. 4 disulfides stabilise this stretch: Cys-162/Cys-190, Cys-206/Cys-448, Cys-467/Cys-480, and Cys-469/Cys-478. Residues Val-239, Asp-267, and 296 to 298 contribute to the UDP-alpha-D-xylose site; that span reads TIW. N-linked (GlcNAc...) asparagine glycosylation is present at Asn-327. 400–401 serves as a coordination point for UDP-alpha-D-xylose; the sequence is DW. UDP-alpha-D-xylose-binding positions include Ser-481 and 504–505; that span reads RK. Disulfide bonds link Cys-581-Cys-833 and Cys-826-Cys-839. N-linked (GlcNAc...) asparagine glycosylation is present at Asn-683.

This sequence belongs to the glycosyltransferase 14 family. XylT subfamily. As to quaternary structure, monomer. The cofactor is Mg(2+). It depends on Mn(2+) as a cofactor. In terms of processing, contains disulfide bonds. As to expression, detected in brain, liver, lung, kidney, heart, spleen and testis, and at lower levels in skeletal muscle.

The protein localises to the golgi apparatus membrane. Its subcellular location is the secreted. The catalysed reaction is UDP-alpha-D-xylose + L-seryl-[protein] = 3-O-(beta-D-xylosyl)-L-seryl-[protein] + UDP + H(+). It functions in the pathway glycan metabolism; chondroitin sulfate biosynthesis. It participates in glycan metabolism; heparan sulfate biosynthesis. Catalyzes the first step in the biosynthesis of chondroitin sulfate, heparan sulfate and dermatan sulfate proteoglycans, such as DCN. Transfers D-xylose from UDP-D-xylose to specific serine residues of the core protein. This chain is Xylosyltransferase 2 (Xylt2), found in Mus musculus (Mouse).